A 188-amino-acid polypeptide reads, in one-letter code: Pyridoxal 5'-phosphate synthase subunit PdxT (188 aa).

47 to 49 (GES) is a binding site for L-glutamine. The Nucleophile role is filled by C79. L-glutamine-binding positions include R105 and 134-135 (IR). Residues H170 and E172 each act as charge relay system in the active site.

This sequence belongs to the glutaminase PdxT/SNO family. As to quaternary structure, in the presence of PdxS, forms a dodecamer of heterodimers. Only shows activity in the heterodimer.

The enzyme catalyses aldehydo-D-ribose 5-phosphate + D-glyceraldehyde 3-phosphate + L-glutamine = pyridoxal 5'-phosphate + L-glutamate + phosphate + 3 H2O + H(+). The catalysed reaction is L-glutamine + H2O = L-glutamate + NH4(+). Its pathway is cofactor biosynthesis; pyridoxal 5'-phosphate biosynthesis. Functionally, catalyzes the hydrolysis of glutamine to glutamate and ammonia as part of the biosynthesis of pyridoxal 5'-phosphate. The resulting ammonia molecule is channeled to the active site of PdxS. The chain is Pyridoxal 5'-phosphate synthase subunit PdxT from Listeria monocytogenes serotype 4a (strain HCC23).